Consider the following 381-residue polypeptide: Succinyl-diaminopimelate desuccinylase (381 aa).

Histidine 72 is a Zn(2+) binding site. The active site involves aspartate 74. Aspartate 105 contributes to the Zn(2+) binding site. Catalysis depends on glutamate 139, which acts as the Proton acceptor. The Zn(2+) site is built by glutamate 140, glutamate 168, and histidine 354.

It belongs to the peptidase M20A family. DapE subfamily. Homodimer. Zn(2+) is required as a cofactor. The cofactor is Co(2+).

It carries out the reaction N-succinyl-(2S,6S)-2,6-diaminopimelate + H2O = (2S,6S)-2,6-diaminopimelate + succinate. Its pathway is amino-acid biosynthesis; L-lysine biosynthesis via DAP pathway; LL-2,6-diaminopimelate from (S)-tetrahydrodipicolinate (succinylase route): step 3/3. In terms of biological role, catalyzes the hydrolysis of N-succinyl-L,L-diaminopimelic acid (SDAP), forming succinate and LL-2,6-diaminopimelate (DAP), an intermediate involved in the bacterial biosynthesis of lysine and meso-diaminopimelic acid, an essential component of bacterial cell walls. The chain is Succinyl-diaminopimelate desuccinylase from Shewanella sp. (strain ANA-3).